A 227-amino-acid polypeptide reads, in one-letter code: UMP-CMP kinase (227 aa).

35–40 (GAGKGT) contacts ATP. Positions 55–85 (SAGDLLRAEQHREGSEYGQLIQTCIKEGSIV) are NMP. A ribonucleoside 5'-phosphate-binding positions include R61, 83-85 (SIV), 122-125 (GFPR), and Q129. An LID region spans residues 159-169 (ERGKTSGREDD). Residue R160 participates in ATP binding. Residues R166 and R177 each contribute to the a ribonucleoside 5'-phosphate site. V205 contributes to the ATP binding site.

The protein belongs to the adenylate kinase family. UMP-CMP kinase subfamily. As to quaternary structure, monomer. Mg(2+) is required as a cofactor.

The protein localises to the cytoplasm. The protein resides in the nucleus. It catalyses the reaction UMP + ATP = UDP + ADP. Its function is as follows. Catalyzes the phosphorylation of pyrimidine nucleoside monophosphates at the expense of ATP. Plays an important role in de novo pyrimidine nucleotide biosynthesis. Has preference for UMP and CMP as phosphate acceptors, but can also use AMP and dCMP to a lesser extent. May play a role during the formation of basidiospores in the gill tissue. This Lentinula edodes (Shiitake mushroom) protein is UMP-CMP kinase (uck1).